Consider the following 420-residue polypeptide: Glutaryl-CoA dehydrogenase, mitochondrial (420 aa).

A substrate-binding site is contributed by 125–126 (RS). FAD is bound by residues 164–167 (FGLT), serine 173, and 198–200 (WIT). Serine 173 serves as a coordination point for substrate. Substrate is bound by residues 273–277 (FSCLN) and arginine 280. The Proton acceptor role is filled by glutamate 400. FAD-binding residues include threonine 402 and phenylalanine 420.

Belongs to the acyl-CoA dehydrogenase family. Requires FAD as cofactor.

It localises to the mitochondrion matrix. It carries out the reaction glutaryl-CoA + oxidized [electron-transfer flavoprotein] + 2 H(+) = (2E)-butenoyl-CoA + reduced [electron-transfer flavoprotein] + CO2. Its pathway is amino-acid metabolism; lysine degradation. It participates in amino-acid metabolism; tryptophan metabolism. This chain is Glutaryl-CoA dehydrogenase, mitochondrial (gcdh), found in Dictyostelium discoideum (Social amoeba).